A 212-amino-acid chain; its full sequence is Pyridoxine/pyridoxamine 5'-phosphate oxidase (212 aa).

Substrate contacts are provided by residues R7–Y10 and K65. FMN contacts are provided by residues R60 to K65, F75 to T76, K82, and Q104. Residues Y122, R126, and S130 each contribute to the substrate site. FMN contacts are provided by residues Q139–S140 and W184. Residue R190–H192 coordinates substrate. R194 is an FMN binding site.

Belongs to the pyridoxamine 5'-phosphate oxidase family. As to quaternary structure, homodimer. Requires FMN as cofactor.

It catalyses the reaction pyridoxamine 5'-phosphate + O2 + H2O = pyridoxal 5'-phosphate + H2O2 + NH4(+). The enzyme catalyses pyridoxine 5'-phosphate + O2 = pyridoxal 5'-phosphate + H2O2. It participates in cofactor metabolism; pyridoxal 5'-phosphate salvage; pyridoxal 5'-phosphate from pyridoxamine 5'-phosphate: step 1/1. Its pathway is cofactor metabolism; pyridoxal 5'-phosphate salvage; pyridoxal 5'-phosphate from pyridoxine 5'-phosphate: step 1/1. Its function is as follows. Catalyzes the oxidation of either pyridoxine 5'-phosphate (PNP) or pyridoxamine 5'-phosphate (PMP) into pyridoxal 5'-phosphate (PLP). The chain is Pyridoxine/pyridoxamine 5'-phosphate oxidase from Aliarcobacter butzleri (strain RM4018) (Arcobacter butzleri).